The chain runs to 144 residues: Phosphomevalonate dehydratase small subunit (144 aa).

The active-site Proton acceptor is the serine 65.

The protein belongs to the AcnX type II small subunit family. Heterodimer composed of a large subunit (PMDh-L) and a small subunit (PMDh-S).

The catalysed reaction is (R)-5-phosphomevalonate = (2E)-3-methyl-5-phosphooxypent-2-enoate + H2O. Its pathway is isoprenoid biosynthesis; isopentenyl diphosphate biosynthesis via mevalonate pathway. Functionally, component of a hydro-lyase that catalyzes the dehydration of mevalonate 5-phosphate (MVA5P) to form trans-anhydromevalonate 5-phosphate (tAHMP). Involved in the archaeal mevalonate (MVA) pathway, which provides fundamental precursors for isoprenoid biosynthesis, such as isopentenyl diphosphate (IPP) and dimethylallyl diphosphate (DMAPP). The polypeptide is Phosphomevalonate dehydratase small subunit (Methanosarcina mazei (strain ATCC BAA-159 / DSM 3647 / Goe1 / Go1 / JCM 11833 / OCM 88) (Methanosarcina frisia)).